We begin with the raw amino-acid sequence, 272 residues long: MKLRKIFLLPLISLSTLSVACSSTDPGLEKAQAYFQRNNIELSKNNAVTFLKKGYSSDKEEVINTVFASWKTTLLDYQLLEKPLDYSRFAKAFGVNKSKEDVTPNISAKGLYFDETYPGISGQIALVLGVKSQKVVNFQYSWKNNLDFKVQIHLKMTGIVGSDNTSTSLIKSFLASTSGVSESDFTGDKANFDGDVIFTYTPPTDNRRVSESTFSSIPASINFPFDIKIDMSTSHEKLNLLLSTNEQVKKIRTRTFKGKSIDLLPFFYYTLL.

Positions 1–20 are cleaved as a signal peptide; the sequence is MKLRKIFLLPLISLSTLSVA. Residue Cys21 is the site of N-palmitoyl cysteine attachment. The S-diacylglycerol cysteine moiety is linked to residue Cys21.

The protein belongs to the MG439/MG440 family.

It localises to the cell membrane. This is an uncharacterized protein from Mycoplasma genitalium (strain ATCC 33530 / DSM 19775 / NCTC 10195 / G37) (Mycoplasmoides genitalium).